The following is a 1441-amino-acid chain: Envelopment polyprotein (1441 aa).

The signal sequence occupies residues 1–13 (MICILVLITVAAA). Residues 14–200 (SPVYQRCFQD…GSIANSICQN (187 aa)) lie on the Lumenal side of the membrane. The N-linked (GlcNAc...) asparagine; by host glycan is linked to Asn-57. The segment at 201 to 221 (IEIIILVTLTLLIFILLSILS) is a transmembrane helix. Residues 222 to 305 (KTYICYLLMP…RAARVMCKSK (84 aa)) lie on the Cytoplasmic side of the membrane. Over 306 to 326 (GPASILSIITAVLVLTFVTPI) the chain traverses the membrane. The Lumenal segment spans residues 327–361 (NSMVLGESKETFELEDLPDDMLEMASRINSYYLTC). Over 362 to 382 (ILNYAVSWGLVIIGLLIGLLF) the chain traverses the membrane. Residues 383-450 (KKYQHRFLNV…NCLVQYKAKW (68 aa)) are Cytoplasmic-facing. A membrane pass occupies residues 451-471 (MMNFLIIYIFLILIKDSAIVV). The Lumenal segment spans residues 472–1395 (QAAGTDFTTC…EPFKNLFGSY (924 aa)). A glycan (N-linked (GlcNAc...) asparagine; by host) is linked at Asn-490. Residues 1066 to 1087 (WGCEEFGCLAVSDGCVFGSCQD) form a fusion peptide region. Asn-1177 carries N-linked (GlcNAc...) asparagine; by host glycosylation. Residues 1396-1416 (IGIFYTFIISIVVLLVIIYVL) are membrane-embedded. Topologically, residues 1417–1433 (LPICFKLRDTLRKHEDA) are cytoplasmic.

This sequence belongs to the orthobunyaviruses M polyprotein family. In terms of assembly, glycoprotein C and Glycoprotein N interact with each other.

It localises to the virion membrane. Its subcellular location is the host Golgi apparatus membrane. The protein resides in the host endoplasmic reticulum membrane. Functionally, glycoprotein C and glycoprotein N interact with each other and are present at the surface of the virion. They are able to attach the virion to a cell receptor and to promote fusion of membranes after endocytosis of the virion. This chain is Envelopment polyprotein (GP), found in Bunyavirus La Crosse (isolate Human/United States/L78/1978).